A 162-amino-acid polypeptide reads, in one-letter code: Protein SLM4 (162 aa).

The chain crosses the membrane as a helical span at residues 127-144; sequence LLLLFIAEGSFPYGLLVI.

In terms of assembly, component of the GSE complex composed of GTR1, GTR2, SLM4, MEH1 and LTV1. Component of the EGO complex, at least composed of GTR2, SLM4 and MEH1.

The protein localises to the vacuole membrane. Functionally, component of the GSE complex, a GTPase complex required for intracellular sorting of GAP1 out of the endosome. Component of the EGO complex, a complex involved in the regulation of microautophagy. This Saccharomyces cerevisiae (strain ATCC 204508 / S288c) (Baker's yeast) protein is Protein SLM4 (SLM4).